Consider the following 476-residue polypeptide: Proline--tRNA ligase 2 (476 aa).

The protein belongs to the class-II aminoacyl-tRNA synthetase family. ProS type 3 subfamily. In terms of assembly, homodimer.

It is found in the cytoplasm. It carries out the reaction tRNA(Pro) + L-proline + ATP = L-prolyl-tRNA(Pro) + AMP + diphosphate. Functionally, catalyzes the attachment of proline to tRNA(Pro) in a two-step reaction: proline is first activated by ATP to form Pro-AMP and then transferred to the acceptor end of tRNA(Pro). This chain is Proline--tRNA ligase 2, found in Bacillus cereus (strain ZK / E33L).